The chain runs to 22 residues: Leptoglycin (22 aa).

Residues 1-22 (GLLGGLLGPLLGGGGGGGGGLL) form a disordered region.

In terms of tissue distribution, expressed by the skin glands.

It localises to the secreted. Antimicrobial protein. Has antibacterial activity against the Gram-negative bacteria E.coli ATCC 28922 (MIC=50 uM), P.aeruginosa ATCC 9027 (MIC=8 uM) and C.freundii ATCC 8090 (MIC=75 uM). Does not have hemolytic activity. This is Leptoglycin from Leptodactylus pentadactylus (Smokey jungle frog).